We begin with the raw amino-acid sequence, 671 residues long: Phosphoenolpyruvate carboxykinase (ATP) 1 (671 aa).

Residues 1 to 10 show a composition bias toward low complexity; it reads MSAGNGNATN. Residues 1-44 form a disordered region; sequence MSAGNGNATNGDGGFSFPKGPVMPKITTGAAKRGSGVCHDDSGP. Position 2 is an N-acetylserine (Ser2). Ser62 is subject to Phosphoserine. Position 66 is a phosphothreonine (Thr66). Residues 100-127 are disordered; the sequence is TRESGPKVVRGDPAEKKTDGSTTPAYAH. Positions 108 to 118 are enriched in basic and acidic residues; it reads VRGDPAEKKTD. Residue Arg189 coordinates substrate. Residues His270 and Asn271 each contribute to the Ca(2+) site. Substrate contacts are provided by Tyr328 and Lys334. ATP-binding positions include Lys334, His353, and 369–377; that span reads GLSGTGKTT. Lys334 and His353 together coordinate Mn(2+). Asp390 contributes to the Mn(2+) binding site. Gly404 contributes to the Ca(2+) binding site. ATP-binding positions include Glu418, Arg455, 574–575, Ile575, and Thr580; that span reads RI. Arg455 contributes to the substrate binding site.

Belongs to the phosphoenolpyruvate carboxykinase (ATP) family. As to quaternary structure, monomer. Mn(2+) is required as a cofactor. As to expression, expressed in cotyledons, flowers, siliques, seeds, leaves, stems and roots. Localized in mid-veins.

It is found in the cytoplasm. It carries out the reaction oxaloacetate + ATP = phosphoenolpyruvate + ADP + CO2. It functions in the pathway carbohydrate biosynthesis; gluconeogenesis. With respect to regulation, allosterically activated by calcium. It may represent the only case of a monomeric, allosteric enzyme. Its function is as follows. Involved in the gluconeogenesis. Catalyzes the conversion of oxaloacetate (OAA) to phosphoenolpyruvate (PEP) through direct phosphoryl transfer between the nucleoside triphosphate and OAA. The polypeptide is Phosphoenolpyruvate carboxykinase (ATP) 1 (Arabidopsis thaliana (Mouse-ear cress)).